A 627-amino-acid chain; its full sequence is (R)-linalool synthase 1, chloroplastic (627 aa).

The N-terminal 21 residues, 1-21 (MAFVSIAPLASRCCVHKSFVS), are a transit peptide targeting the chloroplast. Asp378, Asp382, and Glu530 together coordinate Mg(2+). The DDXXD motif signature appears at 378–382 (DDIYD).

Belongs to the terpene synthase family. Tpsd subfamily. Requires Mg(2+) as cofactor. Mn(2+) is required as a cofactor.

The protein localises to the plastid. The protein resides in the chloroplast. The enzyme catalyses (2E)-geranyl diphosphate + H2O = (R)-linalool + diphosphate. The protein operates within terpene metabolism; oleoresin biosynthesis. Its function is as follows. Terpene synthase (TPS) involved in the biosynthesis of monoterpene natural products included in conifer oleoresin secretions and volatile emissions; these compounds contribute to biotic and abiotic stress defense against herbivores and pathogens. Catalyzes the conversion of (2E)-geranyl diphosphate (GPP) to (R)-linalool. This chain is (R)-linalool synthase 1, chloroplastic, found in Picea sitchensis (Sitka spruce).